A 782-amino-acid chain; its full sequence is E3 ubiquitin-protein ligase SopA (782 aa).

Positions V137 to A171 are disordered. The segment covering P157–A171 has biased composition (low complexity). C753 (glycyl thioester intermediate) is an active-site residue.

The protein belongs to the SopA E3 ligase family. In terms of processing, ubiquitinated in the presence of host E1 ubiquitin-activating enzyme, E2 ubiquitin-conjugating enzyme and ubiquitin.

The protein localises to the secreted. It is found in the host mitochondrion. The enzyme catalyses S-ubiquitinyl-[E2 ubiquitin-conjugating enzyme]-L-cysteine + [acceptor protein]-L-lysine = [E2 ubiquitin-conjugating enzyme]-L-cysteine + N(6)-ubiquitinyl-[acceptor protein]-L-lysine.. Its function is as follows. Effector proteins function to alter host cell physiology and promote bacterial survival in host tissues. This protein is an E3 ubiquitin ligase that interferes with host's ubiquitination pathway. Required for inducing polymorphonuclear leukocytes migration across the intestinal epithelium. In Salmonella dublin, this protein is E3 ubiquitin-protein ligase SopA (sopA).